A 219-amino-acid polypeptide reads, in one-letter code: Dehydration-responsive element-binding protein 1F (219 aa).

A disordered region spans residues 1-45 (MDTEDTSSASSSSVSPPSSPGGGHHHRLPPKRRAGRKKFRETRHP). Over residues 7–16 (SSASSSSVSP) the composition is skewed to low complexity. Basic residues predominate over residues 23-41 (GHHHRLPPKRRAGRKKFRE). A DNA-binding region (AP2/ERF) is located at residues 46–105 (VYRGVRARAGGSRWVCEVREPQAQARIWLGTYPTPEMAARAHDVAAIALRGERGAELNFP). The segment at 134 to 161 (RRPPPPLALPEDPQEGTSGGGATATSGR) is disordered.

This sequence belongs to the AP2/ERF transcription factor family. ERF subfamily. Mostly expressed in developing seeds and apices.

Its subcellular location is the nucleus. Functionally, transcriptional activator that binds specifically to the DNA sequence 5'-[AG]CCGAC-3'. Binding to the C-repeat/DRE element mediates high salinity- and dehydration-inducible transcription. This Oryza sativa subsp. indica (Rice) protein is Dehydration-responsive element-binding protein 1F (DREB1F).